We begin with the raw amino-acid sequence, 96 residues long: Dynein light chain roadblock-type 1 (96 aa).

Ala2 carries the N-acetylalanine modification.

Belongs to the GAMAD family. Homodimer. The cytoplasmic dynein 1 complex consists of two catalytic heavy chains (HCs) and a number of non-catalytic subunits presented by intermediate chains (ICs), light intermediate chains (LICs) and light chains (LCs); the composition seems to vary in respect to the IC, LIC and LC composition. The heavy chain homodimer serves as a scaffold for the probable homodimeric assembly of the respective non-catalytic subunits. The ICs and LICs bind directly to the HC dimer and the LCs assemble on the IC dimer. Interacts with DYNLRB2. Interacts with DYNC1I1 and DYNC1I2. Interacts with RAB6A isoform 1 (GTP-bound); the interaction is direct. Interacts with RAB6A isoform 2 (GDP-bound); the interaction is direct. Interacts with RAB6B (GDP-bound).

It is found in the cytoplasm. It localises to the cytoskeleton. Functionally, acts as one of several non-catalytic accessory components of the cytoplasmic dynein 1 complex that are thought to be involved in linking dynein to cargos and to adapter proteins that regulate dynein function. Cytoplasmic dynein 1 acts as a motor for the intracellular retrograde motility of vesicles and organelles along microtubules. In Mus musculus (Mouse), this protein is Dynein light chain roadblock-type 1 (Dynlrb1).